The following is an 812-amino-acid chain: Probable inorganic carbon transporter subunit DabA (812 aa).

Zn(2+) is bound by residues Cys337, Asp339, His499, and Cys514.

Belongs to the inorganic carbon transporter (TC 9.A.2) DabA family. Forms a complex with DabB. Zn(2+) serves as cofactor.

It is found in the cell inner membrane. Its function is as follows. Part of an energy-coupled inorganic carbon pump. The protein is Probable inorganic carbon transporter subunit DabA of Xanthomonas oryzae pv. oryzae (strain MAFF 311018).